Reading from the N-terminus, the 951-residue chain is MPENLPVTTLWPAQTEDFSSRHIGPRPSEIGEMLRVVGASSLDDLIDKTIPAAILDRGDHGIGAALTEQDALARLRQIASRNQVLTSMIGQGYYDTVLPPVIQRNILENPAWYTAYTPYQPEISQGRLEALLNFQTLVADLTGLDIANASLLDEGTACAEAMALAQRVGKSKATAFFVDADTHPQTIAVIRTRAEPLGWDVVVGDPETDLDASSVFGALLSYPGSSGQVRDPRKVIAALHEKGAIAALACDPLALVLLESPGALGADIAIGSMQRYGVPMGAGGPHAAFMATRDAFKRHMPGRLVGVSRDSAGKPAYRLALQTREQHIRREKATSNICTAQALLAIIASMYAVYHGPEGLKAIAARTHRMAAILSAGLKTLGATVETDVFFDTITVQAGASAPQVLARAVASGINLRDAGDGRIGMSCDETTTPETIRAVWAAFAGEGADLSAIEQALDVADALPEGLSRTAPLLTHPVFHAHRSETDLLRYMRALADKDLALDRTMIPLGSCTMKLNATAEMIPITWPEFARIHPFAPADQVQGYTELFAYLERTLCAISGYDAVSLQPNSGAQGEYAGLLAIRGYHRARGDENRDVCLIPASAHGTNPASAQMAGMRVVVVACDENGNVDVEDLKAKIAQHDGRVAAIMITYPSTHGVFEERIVEICELVHAAGGQVYLDGANLNAQVGLARPGLYGADVSHFNLHKTFCIPHGGGGPGMGPIGVGKHLAPYLPGRHGIAVSAAPFGSASILPISAAYIMMMGDEGLRQATTMAILNANYIASRLEGHYPVLYRGTNGFTAHECIVDLRSLKDAVGVTVDDIAKRLIDHGFHAPTVSFPVAGTFMIEPTESEGKGELDRFCDAMIAIRAEIAEVEAGRVGMEDSPLRFAPHTTADLAGDWERSYSREAGCFPGGVDTAKYWSPVGRLDNAWGDRNLVCSCPDISTYVEG.

Lysine 709 bears the N6-(pyridoxal phosphate)lysine mark.

Belongs to the GcvP family. As to quaternary structure, the glycine cleavage system is composed of four proteins: P, T, L and H. It depends on pyridoxal 5'-phosphate as a cofactor.

The catalysed reaction is N(6)-[(R)-lipoyl]-L-lysyl-[glycine-cleavage complex H protein] + glycine + H(+) = N(6)-[(R)-S(8)-aminomethyldihydrolipoyl]-L-lysyl-[glycine-cleavage complex H protein] + CO2. In terms of biological role, the glycine cleavage system catalyzes the degradation of glycine. The P protein binds the alpha-amino group of glycine through its pyridoxal phosphate cofactor; CO(2) is released and the remaining methylamine moiety is then transferred to the lipoamide cofactor of the H protein. The polypeptide is Glycine dehydrogenase (decarboxylating) (Gluconobacter oxydans (strain 621H) (Gluconobacter suboxydans)).